Reading from the N-terminus, the 147-residue chain is Ubiquitin-like-conjugating enzyme ATG10 (147 aa).

Cysteine 116 functions as the Glycyl thioester intermediate in the catalytic mechanism.

Belongs to the ATG10 family. In terms of assembly, forms homooligomers. Interacts with ATG10. Interacts with ATG7 and ATG12.

It localises to the preautophagosomal structure membrane. Its function is as follows. E2-like enzyme required for the cytoplasm to vacuole transport (Cvt), autophagy and nucleophagy. Acts as an E2-like enzyme that catalyzes the conjugation of ATG12 to ATG5. ATG12 conjugation to ATG5 is required for proper localization of ATG8 to the preautophagosomal structure (PAS). Likely serves as an ATG5-recognition molecule. The protein is Ubiquitin-like-conjugating enzyme ATG10 of Kluyveromyces marxianus (strain DMKU3-1042 / BCC 29191 / NBRC 104275) (Yeast).